Consider the following 229-residue polypeptide: Non-structural protein P8 (229 aa).

The next 2 helical transmembrane spans lie at 119–139 and 162–182; these read IIHM…VCTL and SLNP…MVCA.

Belongs to the orbivirus NS3 family. In terms of assembly, forms homooligomers via coiled-coil motif. Interacts with host OPTN; this interaction inhibits innate immune response.

It is found in the host cell membrane. It localises to the host Golgi apparatus. Its function is as follows. Plays a role in the inhibition of host innate immune response. Interacts with host OPTN and thus inhibits the recruitment of TBK1 to the host Golgi apparatus. In turn, downstream partner IRF3 cannot be activated and IFN-beta production is impaired. In terms of biological role, facilitates viral particle release either by increasing plasma membrane permeability through a viroporin-like activity or by viral budding. In Bluetongue virus 1 (isolate Australia) (BTV 1), this protein is Non-structural protein P8 (Segment-10).